Consider the following 125-residue polypeptide: Small ribosomal subunit protein uS13 (125 aa).

Positions 94–116 (GLPVRGQRTRTNARTRKGPRKAV) are enriched in basic residues. The disordered stretch occupies residues 94-125 (GLPVRGQRTRTNARTRKGPRKAVRASSAKAGR).

Belongs to the universal ribosomal protein uS13 family. In terms of assembly, part of the 30S ribosomal subunit. Forms a loose heterodimer with protein S19. Forms two bridges to the 50S subunit in the 70S ribosome.

Its function is as follows. Located at the top of the head of the 30S subunit, it contacts several helices of the 16S rRNA. In the 70S ribosome it contacts the 23S rRNA (bridge B1a) and protein L5 of the 50S subunit (bridge B1b), connecting the 2 subunits; these bridges are implicated in subunit movement. Contacts the tRNAs in the A and P-sites. In Nitrosospira multiformis (strain ATCC 25196 / NCIMB 11849 / C 71), this protein is Small ribosomal subunit protein uS13.